Reading from the N-terminus, the 476-residue chain is tRNA-2-methylthio-N(6)-dimethylallyladenosine synthase (476 aa).

The 118-residue stretch at 5–122 (KKLYIKTWGC…LPEMINQVKG (118 aa)) folds into the MTTase N-terminal domain. [4Fe-4S] cluster contacts are provided by Cys14, Cys51, Cys85, Cys159, Cys163, and Cys166. Positions 145–377 (RAEGPSAFVS…QQRINQQAMS (233 aa)) constitute a Radical SAM core domain. In terms of domain architecture, TRAM spans 380 to 443 (RAMLGSVQRI…ANSLRGKVIR (64 aa)).

The protein belongs to the methylthiotransferase family. MiaB subfamily. As to quaternary structure, monomer. It depends on [4Fe-4S] cluster as a cofactor.

Its subcellular location is the cytoplasm. It catalyses the reaction N(6)-dimethylallyladenosine(37) in tRNA + (sulfur carrier)-SH + AH2 + 2 S-adenosyl-L-methionine = 2-methylsulfanyl-N(6)-dimethylallyladenosine(37) in tRNA + (sulfur carrier)-H + 5'-deoxyadenosine + L-methionine + A + S-adenosyl-L-homocysteine + 2 H(+). Catalyzes the methylthiolation of N6-(dimethylallyl)adenosine (i(6)A), leading to the formation of 2-methylthio-N6-(dimethylallyl)adenosine (ms(2)i(6)A) at position 37 in tRNAs that read codons beginning with uridine. The chain is tRNA-2-methylthio-N(6)-dimethylallyladenosine synthase from Photorhabdus laumondii subsp. laumondii (strain DSM 15139 / CIP 105565 / TT01) (Photorhabdus luminescens subsp. laumondii).